The primary structure comprises 419 residues: BTB/POZ domain-containing protein KCTD20 (419 aa).

The 75-residue stretch at 117–191 (EKVTLLVDGT…YKTGIINCPD (75 aa)) folds into the BTB domain.

As to quaternary structure, interacts with AKT1; AKT2 and AKT3. Interacts with PPP2CA and PPP1CA. Part of a complex containing MARK4. In terms of tissue distribution, ubiquitously expressed.

The protein resides in the cytoplasm. Functionally, promotes the phosphorylation of AKT family members. This is BTB/POZ domain-containing protein KCTD20 (Kctd20) from Mus musculus (Mouse).